We begin with the raw amino-acid sequence, 443 residues long: Leucine/methionine racemase (443 aa).

Pyridoxal 5'-phosphate-binding positions include Gly-110–Ser-111 and Gln-247. Lys-273 carries the N6-(pyridoxal phosphate)lysine modification. Residue Thr-302 participates in pyridoxal 5'-phosphate binding.

The protein belongs to the class-III pyridoxal-phosphate-dependent aminotransferase family. Pyridoxal 5'-phosphate serves as cofactor.

The catalysed reaction is L-leucine = D-leucine. It catalyses the reaction L-methionine = D-methionine. With respect to regulation, activity is strongly inhibited by several metal ions, including Co(2+), Zn(2+), Ni(2+), Cu(2+) and Fe(3+), and nonsubstrate amino acids such as L-arginine and L-lysine. Activity is completely abolished in the presence of hydroxylamine, an inhibitor of pyridoxal phosphate-dependent enzymes. Functionally, amino acid racemase with moderate substrate specificity. Is primarily active toward leucine, which is the preferred substrate, and methionine. Also exhibits lower levels of activity toward phenylalanine, alanine and serine. The chain is Leucine/methionine racemase from Thermococcus litoralis (strain ATCC 51850 / DSM 5473 / JCM 8560 / NS-C).